We begin with the raw amino-acid sequence, 631 residues long: Dolichyl-diphosphooligosaccharide--protein glycosyltransferase subunit 2 (631 aa).

A signal peptide spans 1–22 (MASPGASTVFLLALTILAGTQA). Over 23–540 (LTPTHYLTKP…REPEKRPPTV (518 aa)) the chain is Lumenal. The N-linked (GlcNAc...) asparagine glycan is linked to asparagine 106. Lysine 154 is covalently cross-linked (Glycyl lysine isopeptide (Lys-Gly) (interchain with G-Cter in ubiquitin)). Residues 541-561 (VSNTFTALILSPLLLLFALWI) traverse the membrane as a helical segment. At 562–571 (RIGANVSNFT) the chain is on the cytoplasmic side. Residues 572-592 (FAPSTIIFHLGHAAMLGLMYV) form a helical membrane-spanning segment. At 593 to 596 (YWTQ) the chain is on the lumenal side. Residues 597–617 (LNMFQTLKYLAILGSVTFLAG) traverse the membrane as a helical segment. Over 618–631 (NRMLAQQAIKRTAH) the chain is Cytoplasmic.

This sequence belongs to the SWP1 family. As to quaternary structure, component of the oligosaccharyltransferase (OST) complex. OST exists in two different complex forms which contain common core subunits RPN1, RPN2, OST48, OST4, DAD1 and TMEM258, either STT3A or STT3B as catalytic subunits, and form-specific accessory subunits. STT3A complex assembly occurs through the formation of 3 subcomplexes. Subcomplex 1 contains RPN1 and TMEM258, subcomplex 2 contains the STT3A-specific subunits STT3A, DC2/OSTC, and KCP2 as well as the core subunit OST4, and subcomplex 3 contains RPN2, DAD1, and OST48. The STT3A complex can form stable complexes with the Sec61 complex or with both the Sec61 and TRAP complexes. Interacts with DDI2. Interacts with TMEM35A/NACHO.

The protein resides in the endoplasmic reticulum. Its subcellular location is the endoplasmic reticulum membrane. The protein operates within protein modification; protein glycosylation. Its function is as follows. Subunit of the oligosaccharyl transferase (OST) complex that catalyzes the initial transfer of a defined glycan (Glc(3)Man(9)GlcNAc(2) in eukaryotes) from the lipid carrier dolichol-pyrophosphate to an asparagine residue within an Asn-X-Ser/Thr consensus motif in nascent polypeptide chains, the first step in protein N-glycosylation. N-glycosylation occurs cotranslationally and the complex associates with the Sec61 complex at the channel-forming translocon complex that mediates protein translocation across the endoplasmic reticulum (ER). All subunits are required for a maximal enzyme activity. The chain is Dolichyl-diphosphooligosaccharide--protein glycosyltransferase subunit 2 from Canis lupus familiaris (Dog).